A 237-amino-acid polypeptide reads, in one-letter code: DCN1-like protein 5 (237 aa).

Ser-41 is modified (phosphoserine). A DCUN1 domain is found at 46 to 232 (FSRKKCLAWF…LLDEFVEWQK (187 aa)).

Part of a complex that contains DCUN1D5, CUL1 and RBX1; this interaction is bridged by CUL1. Interacts (via the DCUN1 domain) with the unneddylated cullins: interacts with CUL1, CUL2, CUL3, CUL4A, CUL4B and CUL5; these interactions promote the cullin neddylation and the identity of the cullin dictates the affinity of the interaction. Interacts (via DCUN1 domain) with UBE2M (N-terminally acetylated form) and probably with UBE2F (N-terminally acetylated form). May also interact with regulators or subunits of cullin-RING ligases such as RBX1, RNF7, ELOB and DDB1; these interactions are bridged by cullins. Interacts with CAND1; this interaction is bridged by cullins and strongly inhibits the neddylation of cullins. These CAND-cullin-DCNL complexes can only be neddylated in the presence of a substrate adapter. In terms of processing, phosphorylation at Ser-41 is independent of cullin's interaction. Phosphorylated in response to both TICAM1 and MYD88 dependent Toll-like receptor (TLR) pathway activation. Phosphorylated in response to IL1B stimulation.

The protein resides in the nucleus. It is found in the cytoplasm. The protein localises to the cytoskeleton. It localises to the spindle. Contributes to the neddylation of all cullins by transferring NEDD8 from N-terminally acetylated NEDD8-conjugating E2s enzyme to different cullin C-terminal domain-RBX complexes which is necessary for the activation of cullin-RING E3 ubiquitin ligases (CRLs). May play a role in DNA damage response and may participate in cell proliferation and anchorage-independent cell growth. This Rattus norvegicus (Rat) protein is DCN1-like protein 5.